The sequence spans 366 residues: Carbamoyl phosphate synthase small chain (366 aa).

Residues 1–171 form a CPSase region; sequence MKKRKLILED…KPYVVPGRGL (171 aa). S46, G220, and G222 together coordinate L-glutamine. The region spanning 172-359 is the Glutamine amidotransferase type-1 domain; that stretch reads RVVMVDFGAK…LNLIKASKVK (188 aa). C247 acts as the Nucleophile in catalysis. L248, Q251, N289, and Y292 together coordinate L-glutamine. Catalysis depends on residues H332 and E334.

The protein belongs to the CarA family. Composed of two chains; the small (or glutamine) chain promotes the hydrolysis of glutamine to ammonia, which is used by the large (or ammonia) chain to synthesize carbamoyl phosphate. Tetramer of heterodimers (alpha,beta)4.

The catalysed reaction is hydrogencarbonate + L-glutamine + 2 ATP + H2O = carbamoyl phosphate + L-glutamate + 2 ADP + phosphate + 2 H(+). The enzyme catalyses L-glutamine + H2O = L-glutamate + NH4(+). It participates in amino-acid biosynthesis; L-arginine biosynthesis; carbamoyl phosphate from bicarbonate: step 1/1. The protein operates within pyrimidine metabolism; UMP biosynthesis via de novo pathway; (S)-dihydroorotate from bicarbonate: step 1/3. Its function is as follows. Small subunit of the glutamine-dependent carbamoyl phosphate synthetase (CPSase). CPSase catalyzes the formation of carbamoyl phosphate from the ammonia moiety of glutamine, carbonate, and phosphate donated by ATP, constituting the first step of 2 biosynthetic pathways, one leading to arginine and/or urea and the other to pyrimidine nucleotides. The small subunit (glutamine amidotransferase) binds and cleaves glutamine to supply the large subunit with the substrate ammonia. This is Carbamoyl phosphate synthase small chain from Oceanobacillus iheyensis (strain DSM 14371 / CIP 107618 / JCM 11309 / KCTC 3954 / HTE831).